The chain runs to 497 residues: MEQAAKATISLSPPSYAGCCMAACPYRSTRHLRRGGGCSARSISSLRHAPSARVYAAAAAAATPESKSTKENDLVFIAGATGKVGSRAVREFIKLGFRVRAGVRSAQRASSLVQSVEQLKVDDDATSPAERLEIVECDLEKQAQSDIVSAIGNAAIVVCSIGASEKDILDVTGPYRIDYMATNNLVQAATAAKVEHFILVTSLGTNRIGFPAFLLNLFWGVLCWKRRAEEALIGSGLPYTIVRPGGMERPTDAFKETHNLVVAVEDTYVGGLVSNLQVAELIACIASNRRTAYCKVVEAIAETTAPLLPTEDQLANIPSKRQPPPEPEVVQQGETPPKPIQQSQRPLSPYTAFVDLKPPSSPSPCPPSAAAPAPTSTDTAAAGSSSTLNSSATGTPISVDQPKQQQRPLSPYTRYEELKPPSSPSPTPPSAASSASVSASPDTPPAAAASSAALDSSANGTPITGDQLNQQQSPLSPYTRYEELKPPSSPTPSTPKL.

The transit peptide at 1–55 (MEQAAKATISLSPPSYAGCCMAACPYRSTRHLRRGGGCSARSISSLRHAPSARVY) directs the protein to the chloroplast. 75–104 (VFIAGATGKVGSRAVREFIKLGFRVRAGVR) contacts NADP(+). The tract at residues 310-497 (TEDQLANIPS…SSPTPSTPKL (188 aa)) is disordered. Residues 346-367 (PLSPYTAFVDLKPPSSPSPCPP) form repeat 1. Residues 346–495 (PLSPYTAFVD…PPSSPTPSTP (150 aa)) are 3 X 22 AA approximate repeats. The segment covering 359-369 (PSSPSPCPPSA) has biased composition (pro residues). The segment covering 370–387 (AAPAPTSTDTAAAGSSST) has biased composition (low complexity). Polar residues predominate over residues 388-408 (LNSSATGTPISVDQPKQQQRP). Residues 408 to 429 (PLSPYTRYEELKPPSSPSPTPP) form repeat 2. Residues 430-458 (SAASSASVSASPDTPPAAAASSAALDSSA) are compositionally biased toward low complexity. Positions 459 to 476 (NGTPITGDQLNQQQSPLS) are enriched in polar residues. Repeat 3 spans residues 474–495 (PLSPYTRYEELKPPSSPTPSTP). Pro residues predominate over residues 487–497 (PSSPTPSTPKL).

As to quaternary structure, part of the Tic complex. Interacts with TIC110 and TIC55. Interacts with LFNR1 and LFNR2. Component of high molecular weight thylakoid LFNRs-containing protein complexes containing LIR1, LFNR1, LFNR2, TIC62 and TROL proteins.

The protein resides in the plastid. It is found in the chloroplast inner membrane. Its subcellular location is the chloroplast stroma. It localises to the chloroplast thylakoid. Involved in protein precursor import into chloroplasts. Part of the redox regulon consisting of TIC32, TIC 55 and TIC62. Acts as a membrane anchor of LFNR1 and LFNR2. Has a NADPH-dependent dehydrogenase activity, but only after preincubation with lipids. This is Protein TIC 62, chloroplastic (TIC62) from Oryza sativa subsp. japonica (Rice).